Here is a 154-residue protein sequence, read N- to C-terminus: Superoxide dismutase [Cu-Zn] (154 aa).

The Cu cation site is built by His-47, His-49, and His-64. A disulfide bridge links Cys-58 with Cys-147. Zn(2+)-binding residues include His-64, His-72, His-81, and Asp-84. Residue His-121 coordinates Cu cation. Over residues 125–136 (DDLGKGGNEESL) the composition is skewed to basic and acidic residues. The segment at 125 to 144 (DDLGKGGNEESLKTGNAGPR) is disordered. Residue Arg-144 coordinates substrate.

The protein belongs to the Cu-Zn superoxide dismutase family. In terms of assembly, homodimer. Cu cation serves as cofactor. The cofactor is Zn(2+).

It is found in the cytoplasm. The catalysed reaction is 2 superoxide + 2 H(+) = H2O2 + O2. In terms of biological role, destroys radicals which are normally produced within the cells and which are toxic to biological systems. The sequence is that of Superoxide dismutase [Cu-Zn] (SOD1) from Cordyceps tenuipes (Entomopathogenic fungus).